An 840-amino-acid polypeptide reads, in one-letter code: Anaphase-promoting complex subunit CDC16 (840 aa).

Disordered stretches follow at residues 67-97 (AART…TSPY) and 173-212 (GVVR…TTTT). 3 TPR repeats span residues 229-260 (AIER…YNIS), 263-288 (PDDA…LITR), and 296-319 (ILCR…LDVI). Residues 329 to 350 (PSTTAANTMSNNGNNSNTSQPV) form a disordered region. Over residues 330-347 (STTAANTMSNNGNNSNTS) the composition is skewed to low complexity. 11 TPR repeats span residues 357-388 (MESS…AILV), 393-416 (FEAF…LFDS), 426-454 (KEIM…EILA), 464-492 (DVVR…VLEN), 499-526 (ILPA…LAET), 531-560 (AITW…SSIL), 565-593 (AAAW…TASR), 600-628 (LPKL…AYDI), 633-665 (PLVL…VVKD), 671-703 (RTTI…VLEK), and 708-737 (SEIH…SLYL). The segment at 802–840 (RTQKEIFDQNNKALRKGGHDSKTGSNNADDDFDADMELE) is disordered. Acidic residues predominate over residues 829-840 (ADDDFDADMELE).

This sequence belongs to the APC6/CDC16 family. In terms of assembly, the APC/C is composed of at least 13 subunits that stay tightly associated throughout the cell cycle: APC1, APC2, APC4, APC5, APC9, APC11, CDC16, CDC23, CDC26, CDC27, DOC1, MND2 and SWM1. Interacts with AMA1. Post-translationally, phosphorylated by CDC28, which is required for the early mitotic activity of the APC/C in its CDC20-bound form.

Its subcellular location is the nucleus. It participates in protein modification; protein ubiquitination. Its function is as follows. Component of the anaphase promoting complex/cyclosome (APC/C), a cell cycle-regulated E3 ubiquitin-protein ligase complex that controls progression through mitosis and the G1 phase of the cell cycle. The APC/C is thought to confer substrate specificity and, in the presence of ubiquitin-conjugating E2 enzymes, it catalyzes the formation of protein-ubiquitin conjugates that are subsequently degraded by the 26S proteasome. In early mitosis, the APC/C is activated by CDC20 and targets securin PDS1, the B-type cyclin CLB5, and other anaphase inhibitory proteins for proteolysis, thereby triggering the separation of sister chromatids at the metaphase-to-anaphase transition. In late mitosis and in G1, degradation of CLB5 allows activation of the APC/C by CDH1, which is needed to destroy CDC20 and the B-type cyclin CLB2 to allow exit from mitosis and creating the low CDK state necessary for cytokinesis and for reforming prereplicative complexes in G1 prior to another round of replication. This is Anaphase-promoting complex subunit CDC16 (CDC16) from Saccharomyces cerevisiae (strain ATCC 204508 / S288c) (Baker's yeast).